The chain runs to 324 residues: Histidine N-acetyltransferase (324 aa).

The N-acetyltransferase domain occupies 15 to 151 (FEFVLAAEKE…GILLLSFNAP (137 aa)).

It carries out the reaction L-histidine + acetyl-CoA = N(alpha)-acetyl-L-histidine + CoA + H(+). In terms of biological role, enzyme responsible for the N-acetyl-histidine (NAH) synthesis, which is a major constituent of brain and lens of ectothermic vertebrates. The sequence is that of Histidine N-acetyltransferase (hisat) from Xenopus tropicalis (Western clawed frog).